We begin with the raw amino-acid sequence, 529 residues long: Cytochrome P450 monooxygenase okaD (529 aa).

A helical membrane pass occupies residues 13 to 35 (LPAQHLLASLALVGALLSVGYLL). Cysteine 435 is a heme binding site.

It belongs to the cytochrome P450 family. Heme is required as a cofactor.

It is found in the membrane. It catalyses the reaction okaramine C + 2 reduced [NADPH--hemoprotein reductase] + 2 O2 = okaramine A + 2 oxidized [NADPH--hemoprotein reductase] + 4 H2O + 2 H(+). The protein operates within alkaloid biosynthesis. Its function is as follows. Cytochrome P450 monooxygenase; part of the gene cluster that mediates the biosynthesis of okaramine B, a prenylated indole alkaloid that possesses an unusual octacyclic ring system, including a four-membered azetidine ring and an eight-membered azocine ring, and that exhibits insecticidal activity against silkworm larvae. Within the pathway, okaD likely catalyzes a key step in forming the eight-membered ring of okaramine A using as substrate okaramine C. The biosynthesis begins with the NRPS okaA that condenses two tryptophan molecules into cyclo(L-Trp-L-Trp). Prenylation by the prenyltransferase okaC then leads to the formation of cyclo(N8-(alpha,alpha-dimethylallyl)-L-Trp-6a-(alpha,alpha-dime-thylallyl)-L-Trp). This is followed by indole 2,3-epoxidation by the FAD-dependent monooxygenase okaB to facilitate the formation of the hexahydropyrrolo[2,3-b]indole (HPI) moiety of okaramine C. The cytochrome P450 monooxygenase okaD then likely catalyzes formation of the eight-membered ring of okaramine A. The dioxygenase okaE further forms the unusual 2-dimethyl-3-methyl-azetidine ring to yield 12-deshydroxyl okaramine E, as well as the hydroxylation of 12-deshydroxyl okaramine E to produce okaramine E. The cytochrome P450 monoxygenase okaG converts 12-deshydroxyl okaramine E into 3-desmethyl okaramine B which is further methylated by the methyltransferase okaF into okaramine B. In a shunt pathway, okaG and okaF together are also able to convert okaramine E into okaramine D. Okaramine H is produced by nonenzymatic conversion from okaramine A. This is Cytochrome P450 monooxygenase okaD from Penicillium ochrochloron.